We begin with the raw amino-acid sequence, 382 residues long: Histidinol-phosphate aminotransferase (382 aa).

Lys215 is subject to N6-(pyridoxal phosphate)lysine. Residues 363 to 382 are disordered; that stretch reads NIDNQSKTHSQTSSIRKGTI.

Belongs to the class-II pyridoxal-phosphate-dependent aminotransferase family. Histidinol-phosphate aminotransferase subfamily. In terms of assembly, homodimer. Requires pyridoxal 5'-phosphate as cofactor.

It catalyses the reaction L-histidinol phosphate + 2-oxoglutarate = 3-(imidazol-4-yl)-2-oxopropyl phosphate + L-glutamate. It participates in amino-acid biosynthesis; L-histidine biosynthesis; L-histidine from 5-phospho-alpha-D-ribose 1-diphosphate: step 7/9. This is Histidinol-phosphate aminotransferase from Yersinia pseudotuberculosis serotype O:3 (strain YPIII).